Reading from the N-terminus, the 2035-residue chain is Host cell factor 1 (2035 aa).

Position 2 is an N-acetylalanine (alanine 2). Serine 6 is subject to Phosphoserine. Kelch repeat units follow at residues 44-89 (LIVV…GFVC), 93-140 (RLLV…RLGH), 148-194 (KCYL…ITYG), 217-265 (KLVI…TIGN), and 266-313 (KMYV…LMDT). Residues lysine 105, lysine 163, and lysine 244 each participate in a glycyl lysine isopeptide (Lys-Gly) (interchain with G-Cter in ubiquitin) cross-link. A Glycyl lysine isopeptide (Lys-Gly) (interchain with G-Cter in SUMO2) cross-link involves residue lysine 282. Position 288 is an N6-acetyllysine (lysine 288). Lysine 363 is covalently cross-linked (Glycyl lysine isopeptide (Lys-Gly) (interchain with G-Cter in ubiquitin)). In terms of domain architecture, Fibronectin type-III 1 spans 366-466 (PPARVQLVRA…TTTTIQVLPT (101 aa)). Residues 407–434 (ATATSPTPNPVPSVPANPPKSPAPAAAA) are disordered. Phosphoserine is present on serine 411. The span at 413-428 (TPNPVPSVPANPPKSP) shows a compositional bias: pro residues. Residues 500-550 (LVTMRPASQAGKAPVTVTSLPAGVRMVVPTQSAQGTVIGSSPQMSGMAALA) are required for interaction with OGT. Arginine 504 and arginine 524 each carry omega-N-methylarginine. Serine 598, serine 666, and serine 669 each carry phosphoserine. Residues 610 to 722 (LKTAAAQVGT…KGPLPAGTIL (113 aa)) form an interaction with SIN3A region. An interaction with ZBTB17 region spans residues 750 to 902 (ILGISSVSPS…SLAGAGGHST (153 aa)). Residue lysine 813 is modified to N6-acetyllysine. The interaction with GABP2 stretch occupies residues 813–912 (KIITAVPKIA…SASLATPITT (100 aa)). HCF repeat repeat units follow at residues 1010 to 1035 (TLVC…TVVA), 1072 to 1097 (VRVC…ATSN), and 1101 to 1126 (QHGC…AMSS). The stretch at 1158 to 1183 (AAQGSKSQCQTRQTSATSTTMTVMAT) is one HCF repeat 4; degenerate repeat. Serine 1205 is subject to Phosphoserine. Arginine 1219 is modified (omega-N-methylarginine). Serine 1224 bears the Phosphoserine mark. HCF repeat repeat units follow at residues 1286 to 1311 (TQVC…SNAG) and 1314 to 1339 (QRVC…ATSN). Disordered regions lie at residues 1292–1371 (PPCE…TMSV), 1435–1470 (TVTS…TSSS), and 1487–1515 (VTQS…QQLP). Low complexity-rich tracts occupy residues 1299–1312 (TGTT…NAGS), 1329–1339 (TTHTATTATSN), and 1362–1371 (TTSTGTTMSV). One copy of the HCF repeat 7; degenerate repeat lies at 1349–1374 (QQPPAGRPCETHQTTSTGTTMSVSVG). Residues 1414-1439 (QRVCSNPPCETHETGTTHTATTVTSN) form an HCF repeat 8 repeat. Threonine 1491 is modified (phosphothreonine). Residues 1493-1502 (VPGPSVPPPE) are compositionally biased toward pro residues. Phosphoserine is present on residues serine 1497, serine 1507, and serine 1771. 2 consecutive Fibronectin type-III domains span residues 1797–1888 (LPPP…TCLP) and 1890–2006 (FPGA…TSKD). Glycyl lysine isopeptide (Lys-Gly) (interchain with G-Cter in ubiquitin) cross-links involve residues lysine 1807 and lysine 1808. Position 1838 is a phosphoserine (serine 1838). The disordered stretch occupies residues 1994 to 2035 (ATQVRWLQETSKDSSGTKPANKRPMSSPEMKSAPKKSKADGQ). Lysine 2005 is subject to N6-acetyllysine. Residue lysine 2024 forms a Glycyl lysine isopeptide (Lys-Gly) (interchain with G-Cter in SUMO2) linkage.

Composed predominantly of six polypeptides ranging from 110 to 150 kDa and a minor 300 kDa polypeptide. The majority of N- and C-terminal cleavage products remain tightly, albeit non-covalently, associated. Interacts with POU2F1, CREB3, ZBTB17, EGR2, E2F4, CREBZF, SP1, GABP2, Sin3 HDAC complex (SIN3A, HDAC1, HDAC2, SUDS3), SAP30, SIN3B and FHL2. Component of a MLL1 complex, composed of at least the core components KMT2A/MLL1, ASH2L, HCFC1, WDR5 and RBBP5, as well as the facultative components BACC1, CHD8, DPY30, E2F6, HCFC2, HSP70, INO80C, KANSL1, LAS1L, MAX, MCRS1, MEN1, MGA, KAT8, PELP1, PHF20, PRP31, RING2, RUVBL1, RUVBL2, SENP3, TAF1, TAF4, TAF6, TAF7, TAF9 and TEX10. Component of a THAP1/THAP3-HCFC1-OGT complex that is required for the regulation of the transcriptional activity of RRM1. Interacts directly with THAP3 (via its HBM). Interacts (via the Kelch-repeat domain) with THAP1 (via the HBM); the interaction recruits HCHC1 to the RRM1. Interacts with THAP7 and THAP11 (via the HMB). Interacts directly with OGT; the interaction, which requires the HCFC1 cleavage site domain, glycosylates and promotes the proteolytic processing of HCFC1, retains OGT in the nucleus and impacts the expression of herpes simplex virus immediate early viral genes. Component of the SET1 complex, at least composed of the catalytic subunit (SETD1A or SETD1B), WDR5, WDR82, RBBP5, ASH2L, CXXC1, HCFC1 and DPY30. Component of the NSL complex at least composed of MOF/KAT8, KANSL1, KANSL2, KANSL3, MCRS1, PHF20, OGT1/OGT, WDR5 and HCFC1. Component of a complex at least composed of ZNF335, HCFC1, CCAR2, EMSY, MKI67, RBBP5, ASH2L and WDR5; the complex is formed as a result of interactions between components of a nuclear receptor-mediated transcription complex and a histone methylation complex. Within the complex interacts with ZNF335. Interacts with TET2 and TET3. Interacts with HCFC1R1. Interacts with THAP11. Interacts (via Kelch domain) with KMT2E/MLL5 isoform 3 (via HBM motif). Interacts with E2F1. Accessory scaffold component of the polycomb repressive deubiquitinase (PR-DUB) complex, at least composed of BAP1, one of ASXL1, ASXL2 or (probably) ASXL3 and one of MBD5 or MBD6; the PR-DUB core associates with a number of accessory proteins, including FOXK1, FOXK2, KDM1B, HCFC1, YY1 and OGT. Interacts with YY1 (via Gly-rich region); the interaction is direct. Interacts with BAP1 (via HBM-like motif). In terms of assembly, (Microbial infection) Associates with the VP16-induced complex; binding to HCFC1 activates the viral transcriptional activator VP16 for association with POU2F1, to form a multiprotein-DNA complex responsible for activating transcription of the viral immediate early genes. Interacts with the viral transactivator protein VP16. Proteolytically cleaved at one or several PPCE--THET sites within the HCF repeats. Further cleavage of the primary N- and C-terminal chains results in a 'trimming' and accumulation of the smaller chains. Cleavage is promoted by O-glycosylation. Post-translationally, O-glycosylated. GlcNAcylation by OGT promotes proteolytic processing. In terms of processing, ubiquitinated. Lys-1807 and Lys-1808 are ubiquitinated both via 'Lys-48'- and 'Lys-63'-linked polyubiquitin chains. BAP1 mediated deubiquitination of 'Lys-48'-linked polyubiquitin chains; deubiquitination by BAP1 does not seem to stabilize the protein. Highly expressed in fetal tissues and the adult kidney. Present in all tissues tested.

It is found in the cytoplasm. The protein resides in the nucleus. In terms of biological role, transcriptional coregulator. Serves as a scaffold protein, bridging interactions between transcription factors, including THAP11 and ZNF143, and transcriptional coregulators. Involved in control of the cell cycle. Also antagonizes transactivation by ZBTB17 and GABP2; represses ZBTB17 activation of the p15(INK4b) promoter and inhibits its ability to recruit p300. Coactivator for EGR2 and GABP2. Tethers the chromatin modifying Set1/Ash2 histone H3 'Lys-4' methyltransferase (H3K4me) and Sin3 histone deacetylase (HDAC) complexes (involved in the activation and repression of transcription, respectively) together. Component of a THAP1/THAP3-HCFC1-OGT complex that is required for the regulation of the transcriptional activity of RRM1. As part of the NSL complex it may be involved in acetylation of nucleosomal histone H4 on several lysine residues. Recruits KMT2E/MLL5 to E2F1 responsive promoters promoting transcriptional activation and thereby facilitates G1 to S phase transition. Modulates expression of homeobox protein PDX1, perhaps acting in concert with transcription factor E2F1, thereby regulating pancreatic beta-cell growth and glucose-stimulated insulin secretion. May negatively modulate transcriptional activity of FOXO3. Its function is as follows. (Microbial infection) In case of human herpes simplex virus (HSV) infection, HCFC1 forms a multiprotein-DNA complex with the viral transactivator protein VP16 and POU2F1 thereby enabling the transcription of the viral immediate early genes. In Homo sapiens (Human), this protein is Host cell factor 1.